We begin with the raw amino-acid sequence, 458 residues long: Methionine aminopeptidase 2-2 (458 aa).

Residues 1–14 are compositionally biased toward basic and acidic residues; the sequence is MGSKTPERDGHKGQ. The interval 1-93 is disordered; that stretch reads MGSKTPERDG…QSSPPRVPLS (93 aa). The segment covering 67–82 has biased composition (basic residues); sequence QKKKRKSKKKGKKKAA. Histidine 209 is a binding site for substrate. The a divalent metal cation site is built by aspartate 230, aspartate 241, and histidine 310. Histidine 318 is a binding site for substrate. Residues glutamate 343 and glutamate 439 each contribute to the a divalent metal cation site.

This sequence belongs to the peptidase M24A family. Methionine aminopeptidase eukaryotic type 2 subfamily. The cofactor is Co(2+). Requires Zn(2+) as cofactor. Mn(2+) is required as a cofactor. Fe(2+) serves as cofactor.

The protein resides in the cytoplasm. It carries out the reaction Release of N-terminal amino acids, preferentially methionine, from peptides and arylamides.. Its function is as follows. Cotranslationally removes the N-terminal methionine from nascent proteins. The N-terminal methionine is often cleaved when the second residue in the primary sequence is small and uncharged (Met-Ala-, Cys, Gly, Pro, Ser, Thr, or Val). This is Methionine aminopeptidase 2-2 from Emericella nidulans (strain FGSC A4 / ATCC 38163 / CBS 112.46 / NRRL 194 / M139) (Aspergillus nidulans).